Here is a 447-residue protein sequence, read N- to C-terminus: Na(+)-translocating NADH-quinone reductase subunit A (447 aa).

This sequence belongs to the NqrA family. As to quaternary structure, composed of six subunits; NqrA, NqrB, NqrC, NqrD, NqrE and NqrF.

The catalysed reaction is a ubiquinone + n Na(+)(in) + NADH + H(+) = a ubiquinol + n Na(+)(out) + NAD(+). Its function is as follows. NQR complex catalyzes the reduction of ubiquinone-1 to ubiquinol by two successive reactions, coupled with the transport of Na(+) ions from the cytoplasm to the periplasm. NqrA to NqrE are probably involved in the second step, the conversion of ubisemiquinone to ubiquinol. The protein is Na(+)-translocating NADH-quinone reductase subunit A of Neisseria meningitidis serogroup A / serotype 4A (strain DSM 15465 / Z2491).